Here is a 90-residue protein sequence, read N- to C-terminus: Small ribosomal subunit protein uS15 (90 aa).

It belongs to the universal ribosomal protein uS15 family. As to quaternary structure, part of the 30S ribosomal subunit. Forms a bridge to the 50S subunit in the 70S ribosome, contacting the 23S rRNA.

One of the primary rRNA binding proteins, it binds directly to 16S rRNA where it helps nucleate assembly of the platform of the 30S subunit by binding and bridging several RNA helices of the 16S rRNA. Functionally, forms an intersubunit bridge (bridge B4) with the 23S rRNA of the 50S subunit in the ribosome. The protein is Small ribosomal subunit protein uS15 of Helicobacter pylori (strain HPAG1).